The primary structure comprises 1043 residues: Rho GTPase-activating protein gacZ (1043 aa).

A disordered region spans residues 1 to 44 (MTTTNTSIFGPRVNNSKFNNNNNNNNNNNNNNNNTSNNNNSNII). Residues 14–44 (NNSKFNNNNNNNNNNNNNNNNTSNNNNSNII) show a composition bias toward low complexity. Zn(2+) is bound by residues Cys71, Cys74, Cys82, Cys85, Cys91, His95, His103, and Cys107. The MYND-type; atypical zinc-finger motif lies at 71–107 (CVICKSKNVQVCTGCLMVYYCGAEHQNIDWPNHKSLC). Disordered stretches follow at residues 137 to 163 (SGNR…NNNN), 199 to 532 (HLQQ…NNSN), 546 to 594 (DGLS…NGNR), 614 to 690 (FYQS…TNNN), 706 to 772 (NTSQ…QLSA), and 801 to 842 (NKVS…NNNN). Residues 201-225 (QQQIQQTQQTQQQPPPTTTSIPTQP) show a composition bias toward low complexity. The span at 241–253 (SFKSSSSGDNTPI) shows a compositional bias: polar residues. 2 stretches are compositionally biased toward low complexity: residues 254 to 293 (NQSP…NMSG) and 307 to 411 (NSIN…TNEE). Residues 453 to 466 (GTLKQSSSSDSIYF) are compositionally biased toward polar residues. 2 stretches are compositionally biased toward low complexity: residues 467–532 (NNNN…NNSN) and 547–594 (GLSY…NGNR). A compositionally biased stretch (polar residues) spans 615 to 625 (YQSNKNQSNGY). Positions 644–671 (ENDDSHEECDDDDDDDDGGGQDGDDGLD) are enriched in acidic residues. 4 stretches are compositionally biased toward low complexity: residues 726–736 (DTQSQSTNSTT), 752–771 (SSDD…SQLS), 801–821 (NKVS…NNNN), and 829–842 (NNNN…NNNN). The stretch at 825–852 (DHNENNNNNNNNINNNNNNNNNNIENII) forms a coiled coil. Residues 855-1043 (IPLEEAVKKS…FGIQTYNYNS (189 aa)) enclose the Rho-GAP domain.

The protein localises to the cytoplasm. Its function is as follows. Rho GTPase-activating protein involved in the signal transduction pathway. The polypeptide is Rho GTPase-activating protein gacZ (gacZ) (Dictyostelium discoideum (Social amoeba)).